A 441-amino-acid polypeptide reads, in one-letter code: MGGSSISTPLDFNKIVEDVEKTLSKYPLCDHCLGRFFAKYGLGLSNRERGSSLKTMLGFKLYDDYSSKRIGRDSLLALAENAGEPLTRMVEKLFAENVNPKTCFICGGRISDEWLDSVAEAVYEKLKEASVTRFVVGVKLGRNLREKELQLVTETGFTRAESLKNEIKREVGKKVMAKYGLVPDFEKPEATAIVKLDENFNYRVELVITPVLLKGVYNKRGRNISHVPWLAKQGGRKYPLSIQEYLESRLADPFKAKKVKIHAAGREDVDARTLGPGRPLVIEIVEPLVRSYDIEDVNKLIRSDLVEVRVHKPASRRDIELLKQTSREKRKVYRLLVVSSTPISEAQLNELEAYFNDIAIQQRTPIRILTRKKDVLRVRKVYEVRTKPVSSTSFEALVYCDGGLYVKELVHCDQGRTNPCFASILNTELKPVELDVLYIEH.

D268 functions as the Nucleophile in the catalytic mechanism. Y333 and Y405 together coordinate substrate.

The protein belongs to the pseudouridine synthase Pus10 family.

The catalysed reaction is uridine(54) in tRNA = pseudouridine(54) in tRNA. It carries out the reaction uridine(55) in tRNA = pseudouridine(55) in tRNA. Functionally, responsible for synthesis of pseudouridine from uracil-54 and uracil-55 in the psi GC loop of transfer RNAs. This is tRNA pseudouridine synthase Pus10 from Thermosphaera aggregans (strain DSM 11486 / M11TL).